A 273-amino-acid polypeptide reads, in one-letter code: 3-methyl-2-oxobutanoate hydroxymethyltransferase (273 aa).

Mg(2+)-binding residues include Asp49 and Asp88. 3-methyl-2-oxobutanoate is bound by residues 49–50 (DS), Asp88, and Lys118. Glu120 serves as a coordination point for Mg(2+). Catalysis depends on Glu187, which acts as the Proton acceptor.

The protein belongs to the PanB family. Homodecamer; pentamer of dimers. Mg(2+) is required as a cofactor.

Its subcellular location is the cytoplasm. It catalyses the reaction 3-methyl-2-oxobutanoate + (6R)-5,10-methylene-5,6,7,8-tetrahydrofolate + H2O = 2-dehydropantoate + (6S)-5,6,7,8-tetrahydrofolate. The protein operates within cofactor biosynthesis; (R)-pantothenate biosynthesis; (R)-pantoate from 3-methyl-2-oxobutanoate: step 1/2. Its function is as follows. Catalyzes the reversible reaction in which hydroxymethyl group from 5,10-methylenetetrahydrofolate is transferred onto alpha-ketoisovalerate to form ketopantoate. In Rhizobium etli (strain ATCC 51251 / DSM 11541 / JCM 21823 / NBRC 15573 / CFN 42), this protein is 3-methyl-2-oxobutanoate hydroxymethyltransferase.